We begin with the raw amino-acid sequence, 124 residues long: Glycine cleavage system H protein (124 aa).

A Lipoyl-binding domain is found at 22–104; sequence KAKVGITDFA…YENGYLFIIE (83 aa). An N6-lipoyllysine modification is found at Lys-63.

The protein belongs to the GcvH family. In terms of assembly, the glycine cleavage system is composed of four proteins: P, T, L and H. It depends on (R)-lipoate as a cofactor.

In terms of biological role, the glycine cleavage system catalyzes the degradation of glycine. The H protein shuttles the methylamine group of glycine from the P protein to the T protein. The sequence is that of Glycine cleavage system H protein from Endomicrobium trichonymphae.